The primary structure comprises 511 residues: Immunoglobulin-binding protein EibD (511 aa).

An N-terminal signal peptide occupies residues 1–26 (MSKKFTMTLLSSSLAGLLVMSGGVSA). A surface exposed passenger domain region spans residues 27–417 (QNGTYSVLQD…SKAIAANTRT (391 aa)). The Extracellular segment spans residues 27–460 (QNGTYSVLQD…GLFQPYSVGK (434 aa)). The head domain stretch occupies residues 161–287 (DAKASGEFSV…TGTESDKTYG (127 aa)). Residues 288 to 303 (TRVLGGLSDGTRNSDA) are neck. The segment at 304-349 (ATVGQLNRKVGGVYDDVKARITVESEKQKKYTDQKTSEVNEKVEAR) is right-handed coiled-coil (RHcc). Residues 304–349 (ATVGQLNRKVGGVYDDVKARITVESEKQKKYTDQKTSEVNEKVEAR) are a coiled coil. The segment at 329–344 (EKQKKYTDQKTSEVNE) is required to bind IgA. Positions 350 to 375 (TTVGVDSDGKLTRAEGATKTIAVNDG) are saddle domain. Residues 376-441 (LVALSGRTDR…INENHKEMKR (66 aa)) are a coiled coil. A left-handed coiled-coil (LHcc) region spans residues 376-441 (LVALSGRTDR…INENHKEMKR (66 aa)). A required to bind IgG region spans residues 384–418 (DRIDYAVGAIDGRVTRNTQSIEKNSKAIAANTRTL). An outer membrane translocation of the passenger domain region spans residues 418 to 460 (LQQHSARLDSQQRQINENHKEMKRAAAQSAALTGLFQPYSVGK). 4 consecutive transmembrane segments (beta stranded) span residues 461-471 (FNATAAVGGYS), 474-485 (QALAVGVGYRFN), 488-497 (TAAKAGVAFS), and 501-511 (ASWNVGVNFEF). Residues 461–511 (FNATAAVGGYSDQQALAVGVGYRFNEQTAAKAGVAFSDGDASWNVGVNFEF) form a translocator domain region.

It belongs to the autotransporter-2 (AT-2) (TC 1.B.40) family. Eib subfamily. In terms of assembly, homotrimer; can probably form mixed heterotrimers in vivo. Will form mixed heterotrimers with EibA or EibC; these are correctly located in the outer membrane and bind IgG Fc, although less well than homotrimers. In denaturing gels runs as a band of about 210 kDa. Binds the Fc portion of immunoglobulins; binds more than 1 Fc per subunit, can be modeled to bind 3 Fc per trimer.

The protein localises to the cell surface. It localises to the cell outer membrane. Its function is as follows. Binds (in a non-immune fashion) to the Fc portion of human IgA and IgG; binding occurs on the cell surface. Confers the ability to survive exposure to human serum exposure. Binds to the Fc portion of human IgG, IgA and to whole mouse antibodies also via Fc. Upon overexpression cells acquire an extra cell surface layer that forms a zipper-like contact between cells; cells autoagglutinate and form biofilm more readily, suggesting it may play a role in defense against a host. The protein is Immunoglobulin-binding protein EibD of Escherichia coli.